The chain runs to 405 residues: Serpin H1 (405 aa).

The N-terminal stretch at Met1–Ala15 is a signal peptide. N-linked (GlcNAc...) asparagine glycans are attached at residues Asn107 and Asn112. The Prevents secretion from ER signature appears at Arg402–Leu405.

The protein belongs to the serpin family.

It is found in the endoplasmic reticulum lumen. Binds specifically to collagen. Could be involved as a chaperone in the biosynthetic pathway of collagen. This is Serpin H1 (SERPINH1) from Gallus gallus (Chicken).